Reading from the N-terminus, the 397-residue chain is Beta sliding clamp (397 aa).

Belongs to the beta sliding clamp family. As to quaternary structure, forms a ring-shaped head-to-tail homodimer around DNA which binds and tethers DNA polymerases and other proteins to the DNA. The DNA replisome complex has a single clamp-loading complex (3 tau and 1 each of delta, delta', psi and chi subunits) which binds 3 Pol III cores (1 core on the leading strand and 2 on the lagging strand) each with a beta sliding clamp dimer. Additional proteins in the replisome are other copies of gamma, psi and chi, Ssb, DNA helicase and RNA primase.

The protein resides in the cytoplasm. Its function is as follows. Confers DNA tethering and processivity to DNA polymerases and other proteins. Acts as a clamp, forming a ring around DNA (a reaction catalyzed by the clamp-loading complex) which diffuses in an ATP-independent manner freely and bidirectionally along dsDNA. Initially characterized for its ability to contact the catalytic subunit of DNA polymerase III (Pol III), a complex, multichain enzyme responsible for most of the replicative synthesis in bacteria; Pol III exhibits 3'-5' exonuclease proofreading activity. The beta chain is required for initiation of replication as well as for processivity of DNA replication. This Mycolicibacterium smegmatis (strain ATCC 700084 / mc(2)155) (Mycobacterium smegmatis) protein is Beta sliding clamp (dnaN).